The primary structure comprises 104 residues: Large ribosomal subunit protein bL21 (104 aa).

This sequence belongs to the bacterial ribosomal protein bL21 family. Part of the 50S ribosomal subunit. Contacts protein L20.

Functionally, this protein binds to 23S rRNA in the presence of protein L20. The chain is Large ribosomal subunit protein bL21 from Streptococcus agalactiae serotype Ia (strain ATCC 27591 / A909 / CDC SS700).